Consider the following 1475-residue polypeptide: ABC transporter G family member 15 (1475 aa).

Over residues 1–10 (MDSNENKKNG) the composition is skewed to basic and acidic residues. 2 disordered regions span residues 1–40 (MDSNENKKNGGDSLELNIINNNNDNNNNNDNNNNSTEEHI) and 75–94 (NIKNDIEAPPSGEFEPGGGA). Positions 17-34 (NIINNNNDNNNNNDNNNN) are enriched in low complexity. A coiled-coil region spans residues 25-67 (NNNNNDNNNNSTEEHIESVEQSIKEFNNVANELETEFRDYLVE). In terms of domain architecture, ABC transporter 1 spans 155–404 (LNVKNWFKKS…FIDMGFECEP (250 aa)). In terms of domain architecture, ABC transmembrane type-2 1 spans 507-753 (WGDKFSLISR…FTGERYLEKS (247 aa)). The next 5 membrane-spanning stretches (helical) occupy residues 596–616 (IPIIMIQVFLFSIVTYFMFGL), 623–641 (FFINCFTLIGFTLATNNLY), 653–673 (IGQNIMNVLFLTMMTFTSYII), 680–699 (VWFGWYHYCNPFSFAFRALM), and 770–790 (ICIVYGFWILFIICNCIVLNI). The ABC transporter 2 domain occupies 842–1087 (FTWQHMYYSV…LTSYFQRHGV (246 aa)). 879 to 886 (GSSGAGKT) provides a ligand contact to ATP. The next 6 membrane-spanning stretches (helical) occupy residues 1180 to 1200 (GYSYGTFIQSALVGLINGWTF), 1216 to 1236 (FIFNVTMLGILLMFLVLPQFI), 1256 to 1276 (FALSIIVVELPFVLVSGTIFF), 1293 to 1313 (FFFWLIFMLFLFYCVGFGQAI), 1323 to 1343 (ALNLLPVLIIFLFLFCGVLVI), and 1449 to 1469 (FGIIAGYFVLNIFLVVLFVFL). The region spanning 1180–1404 (GYSYGTFIQS…TCSDYAFEFL (225 aa)) is the ABC transmembrane type-2 2 domain.

This sequence belongs to the ABC transporter superfamily. ABCG family. PDR (TC 3.A.1.205) subfamily.

The protein localises to the membrane. The polypeptide is ABC transporter G family member 15 (abcG15) (Dictyostelium discoideum (Social amoeba)).